Here is a 333-residue protein sequence, read N- to C-terminus: Dihydroorotate dehydrogenase (quinone) (333 aa).

FMN is bound by residues 56-60 (AGLDK) and threonine 80. Lysine 60 is a substrate binding site. 105-109 (NRMGF) provides a ligand contact to substrate. The FMN site is built by asparagine 133 and asparagine 166. Asparagine 166 contributes to the substrate binding site. Residue serine 169 is the Nucleophile of the active site. Residue asparagine 171 participates in substrate binding. Residues lysine 211 and threonine 239 each contribute to the FMN site. Position 240-241 (240-241 (NT)) interacts with substrate. Residues glycine 262, glycine 291, and 312–313 (YS) each bind FMN.

Belongs to the dihydroorotate dehydrogenase family. Type 2 subfamily. In terms of assembly, monomer. The cofactor is FMN.

Its subcellular location is the cell membrane. The enzyme catalyses (S)-dihydroorotate + a quinone = orotate + a quinol. It participates in pyrimidine metabolism; UMP biosynthesis via de novo pathway; orotate from (S)-dihydroorotate (quinone route): step 1/1. Catalyzes the conversion of dihydroorotate to orotate with quinone as electron acceptor. The sequence is that of Dihydroorotate dehydrogenase (quinone) from Legionella pneumophila (strain Corby).